The sequence spans 252 residues: Ribosomal RNA small subunit methyltransferase J (252 aa).

Residues 101–102 (RD), 117–118 (ER), 153–154 (SS), and D171 each bind S-adenosyl-L-methionine.

The protein belongs to the methyltransferase superfamily. RsmJ family.

The protein localises to the cytoplasm. The catalysed reaction is guanosine(1516) in 16S rRNA + S-adenosyl-L-methionine = N(2)-methylguanosine(1516) in 16S rRNA + S-adenosyl-L-homocysteine + H(+). Specifically methylates the guanosine in position 1516 of 16S rRNA. The sequence is that of Ribosomal RNA small subunit methyltransferase J from Salmonella typhimurium (strain LT2 / SGSC1412 / ATCC 700720).